The sequence spans 470 residues: Angiopoietin-related protein 6 (470 aa).

Positions 1–20 are cleaved as a signal peptide; it reads MGKPWLRALQLLLLLGASWA. Asn58 is a glycosylation site (N-linked (GlcNAc...) asparagine). A coiled-coil region spans residues 59–116; it reads ASELAALRMRVGRHEELLRELQRLAAADGAVAGEVRALRKESRGLSARLGQLRAQLQH. Asn145 carries N-linked (GlcNAc...) (complex) asparagine glycosylation. The tract at residues 214–249 is disordered; it reads SDTSRMLDPAPEPQRDQTQRQQEPMASPMPAGHPAV. One can recognise a Fibrinogen C-terminal domain in the interval 251–469; the sequence is TKPVGPWQDC…KAAMLIRPLK (219 aa). 2 cysteine pairs are disulfide-bonded: Cys260–Cys287 and Cys410–Cys423.

The protein resides in the secreted. In terms of biological role, may play a role in the wound healing process. May promote epidermal proliferation, remodeling and regeneration. May promote the chemotactic activity of endothelial cells and induce neovascularization. May counteract high-fat diet-induced obesity and related insulin resistance through increased energy expenditure. The sequence is that of Angiopoietin-related protein 6 (ANGPTL6) from Homo sapiens (Human).